The sequence spans 1535 residues: CLIP-associating protein 1 (1535 aa).

2 HEAT repeats span residues 87 to 124 (AQIG…QAAN) and 163 to 200 (LTLS…HVGE). The interval 237-290 (NEKNFDDEDSVDGNRPSSASSSSSKAPSSSRRNVNLGTTRRLMSSSLGSKSSAA) is disordered. Ser246 carries the post-translational modification Phosphoserine. The segment covering 252-266 (PSSASSSSSKAPSSS) has biased composition (low complexity). The segment covering 267 to 279 (RRNVNLGTTRRLM) has biased composition (polar residues). The span at 280–290 (SSSLGSKSSAA) shows a compositional bias: low complexity. HEAT repeat units follow at residues 405-440 (HGAE…IRHT) and 441-477 (HIPR…EWQT). Disordered regions lie at residues 543 to 600 (SDSI…RSRS) and 612 to 782 (SKVS…GRIP). Phosphoserine is present on residues Ser545, Ser548, Ser558, Ser559, and Ser568. Low complexity predominate over residues 548-567 (SLPQSDRSSSSSQESLNRPL). The span at 579 to 594 (SRGSTVSTKSVSTTGS) shows a compositional bias: low complexity. Ser600 bears the Phosphoserine mark. The segment covering 612-633 (SKVSSSSGSPAFSSAAALPPGS) has biased composition (low complexity). Phosphoserine occurs at positions 636, 646, 647, and 649. Over residues 645-658 (QSSGSTTNVASTPD) the composition is skewed to polar residues. The residue at position 656 (Thr656) is a Phosphothreonine. The tract at residues 662-782 (RSRAKVVSQS…FGLGQSGRIP (121 aa)) is interaction with microtubules, MAPRE1 and MAPRE3. The span at 673 to 695 (RSRSANPAGAGSRSSSPGKLLGS) shows a compositional bias: low complexity. Phosphoserine is present on residues Ser684, Ser688, Ser695, and Ser702. Thr708 bears the Phosphothreonine mark. Position 711 is a phosphoserine (Ser711). Positions 721 to 730 (QGCSRETSPN) are enriched in polar residues. 3 positions are modified to phosphoserine: Ser784, Ser794, and Ser820. One copy of the HEAT 5 repeat lies at 971–1008 (QQFNILMRFIVDQTQTPNLKVKVAILKYIESLARQMDP). The tract at residues 1078-1157 (LKNSSNTGVG…APSHKTLRRS (80 aa)) is disordered. Residues 1079 to 1094 (KNSSNTGVGSPSNTIG) are compositionally biased toward polar residues. Ser1088 carries the phosphoserine modification. A phosphothreonine mark is found at Thr1092 and Thr1096. The segment covering 1103–1112 (SRTSPLTSPT) has biased composition (low complexity). Phosphoserine occurs at positions 1110, 1139, and 1193. Residues 1200–1213 (PIKRDGKKDCDIVS) show a composition bias toward basic and acidic residues. Disordered stretches follow at residues 1200-1233 (PIKR…EIEG) and 1245-1266 (LNTQ…PYPY). Ser1220 bears the Phosphoserine mark. Residues 1251–1535 (RAFPGPRARE…SSSSDVSTHS (285 aa)) are interaction with CLIP2 and RSN. Residues 1251-1535 (RAFPGPRARE…SSSSDVSTHS (285 aa)) are interaction with PHLDB2. The interval 1253-1535 (FPGPRAREYN…SSSSDVSTHS (283 aa)) is localization to kinetochores. Residues 1296–1327 (DHSDLVADLLKELSNHNERVEERKGALLELLK) adopt a coiled-coil conformation. 2 HEAT repeats span residues 1339–1376 (EHFK…NQPA) and 1457–1494 (QLLV…VIGE).

Belongs to the CLASP family. Interacts with ERC1, MAPRE1, MAPRE3, microtubules, and PHLDB2. The interaction with ERC1 may be mediated by PHLDB2. Interacts with GCC2; recruits CLASP1 to Golgi membranes. Interacts with CLIP2 and RSN. Interacts with MACF1. Interacts with mtcl2 and MTCL1. As to expression, highly expressed in brain and heart and at lower levels in kidney, lung, skeletal muscle and testis.

The protein resides in the cytoplasm. It is found in the cytoskeleton. It localises to the microtubule organizing center. The protein localises to the centrosome. Its subcellular location is the chromosome. The protein resides in the centromere. It is found in the kinetochore. It localises to the spindle. The protein localises to the golgi apparatus. Its subcellular location is the trans-Golgi network. Microtubule plus-end tracking protein that promotes the stabilization of dynamic microtubules. Involved in the nucleation of noncentrosomal microtubules originating from the trans-Golgi network (TGN). Required for the polarization of the cytoplasmic microtubule arrays in migrating cells towards the leading edge of the cell. May act at the cell cortex to enhance the frequency of rescue of depolymerizing microtubules by attaching their plus-ends to cortical platforms composed of ERC1 and PHLDB2. This cortical microtubule stabilizing activity is regulated at least in part by phosphatidylinositol 3-kinase signaling. Also performs a similar stabilizing function at the kinetochore which is essential for the bipolar alignment of chromosomes on the mitotic spindle. The protein is CLIP-associating protein 1 (Clasp1) of Mus musculus (Mouse).